Consider the following 388-residue polypeptide: Succinate--CoA ligase [ADP-forming] subunit beta (388 aa).

Residues 9–244 (KSLFAEYGLP…PSQDDAREAH (236 aa)) enclose the ATP-grasp domain. ATP contacts are provided by residues Lys46, 53–55 (GRG), Glu99, Thr102, and Glu107. 2 residues coordinate Mg(2+): Asn199 and Asp213. Substrate is bound by residues Asn264 and 321-323 (GIV).

This sequence belongs to the succinate/malate CoA ligase beta subunit family. Heterotetramer of two alpha and two beta subunits. Requires Mg(2+) as cofactor.

It catalyses the reaction succinate + ATP + CoA = succinyl-CoA + ADP + phosphate. It carries out the reaction GTP + succinate + CoA = succinyl-CoA + GDP + phosphate. The protein operates within carbohydrate metabolism; tricarboxylic acid cycle; succinate from succinyl-CoA (ligase route): step 1/1. Functionally, succinyl-CoA synthetase functions in the citric acid cycle (TCA), coupling the hydrolysis of succinyl-CoA to the synthesis of either ATP or GTP and thus represents the only step of substrate-level phosphorylation in the TCA. The beta subunit provides nucleotide specificity of the enzyme and binds the substrate succinate, while the binding sites for coenzyme A and phosphate are found in the alpha subunit. This Shewanella putrefaciens (strain CN-32 / ATCC BAA-453) protein is Succinate--CoA ligase [ADP-forming] subunit beta.